The following is a 353-amino-acid chain: Guanine nucleotide-binding protein subunit beta-5 (353 aa).

7 WD repeats span residues 61-100 (GHGNKVLCMDWCKDKRRIVSSSQDGKVIVWDSFTTNKEHA), 103-142 (MPCTWVMACAYAPSGCAIACGGLDNKCSVYPLTFDKNENM), 151-192 (MHTN…QSFH), 194-236 (HGAD…QAFE), 237-276 (THESDVNSVRYYPSGDAFASGSDDATCRLYDLRADREVAI), 278-320 (SKES…RVSI), and 323-352 (GHENRVSTLRVSPDGTAFCSGSWDHTLRVW).

The protein belongs to the WD repeat G protein beta family. As to quaternary structure, component of a complex composed of RGS9 (isoform RGS9-1), GNB5 and RGS9BP; within this complex, the presence of GNB5 stabilizes both itself and RGS9 and increases RGS9 GTPase-activating protein (GAP) activity. Interacts with RGS7, forming the RGS7-GNB5 complex; within this complex, the presence of GNB5 increases RGS7 GTPase-activating protein (GAP) activity. Interacts with GPR158; promotes the GTPase activator activity of the RGS7-GNB5 complex in absence of glycine, in contrast GTPase activator activity of the RGS7-GNB5 complex is inhibited in presence of glycine. Interacts with RGS6. In terms of tissue distribution, detected in brain.

It is found in the membrane. In terms of biological role, enhances GTPase-activating protein (GAP) activity of regulator of G protein signaling (RGS) proteins, such as RGS7 and RGS9, hence involved in the termination of the signaling initiated by the G protein coupled receptors (GPCRs) by accelerating the GTP hydrolysis on the G-alpha subunits, thereby promoting their inactivation. Increases RGS7 GTPase-activating protein (GAP) activity, thereby regulating mood and cognition. Increases RGS9 GTPase-activating protein (GAP) activity, hence contributes to the deactivation of G protein signaling initiated by D(2) dopamine receptors. May play an important role in neuronal signaling, including in the parasympathetic, but not sympathetic, control of heart rate. The sequence is that of Guanine nucleotide-binding protein subunit beta-5 (Gnb5) from Rattus norvegicus (Rat).